We begin with the raw amino-acid sequence, 517 residues long: Recombining binding protein suppressor of hairless-like protein (517 aa).

Residues 26–37 (EMQLQSEADRRS) show a composition bias toward basic and acidic residues. The disordered stretch occupies residues 26-48 (EMQLQSEADRRSLPGTWTRSSPE). DNA-binding stretches follow at residues 78 to 88 (QKSYGNEKRFF), 193 to 198 (SKPSQK), and 220 to 225 (RLRSQT). In terms of domain architecture, IPT/TIG spans 387–512 (LISTLELSGG…HQEFTRTNFH (126 aa)).

Belongs to the Su(H) family. In terms of assembly, interacts weakly with EBNA2. Does not interact with any Notch proteins.

The protein resides in the nucleus. Functionally, putative transcription factor, which cooperates with EBNA2 to activate transcription. The sequence is that of Recombining binding protein suppressor of hairless-like protein (RBPJL) from Homo sapiens (Human).